We begin with the raw amino-acid sequence, 176 residues long: Trypsin inhibitor 1B (176 aa).

2 disulfides stabilise this stretch: Cys-39-Cys-83 and Cys-132-Cys-143.

The protein belongs to the protease inhibitor I3 (leguminous Kunitz-type inhibitor) family.

Its function is as follows. Inhibits trypsin stoichiometrically. The polypeptide is Trypsin inhibitor 1B (Erythrina variegata (Indian coral tree)).